The following is a 510-amino-acid chain: NAD(P)H-quinone oxidoreductase subunit 2 B, chloroplastic (510 aa).

The next 12 membrane-spanning stretches (helical) occupy residues 24 to 44, 57 to 77, 99 to 119, 124 to 144, 183 to 203, 227 to 247, 295 to 315, 323 to 343, 347 to 367, 395 to 415, 418 to 438, and 484 to 504; these read LLLF…GLIL, IPWL…ALLF, IFQF…VEYI, MAIT…MFLC, YLLM…WLYG, PGIS…LSPA, WHLL…LIAI, MLAY…IVGD, GYAS…GTFA, ALSS…AGFF, LHLF…IGLL, and MIVC…IIAI.

Belongs to the complex I subunit 2 family. NDH is composed of at least 16 different subunits, 5 of which are encoded in the nucleus.

It is found in the plastid. It localises to the chloroplast thylakoid membrane. The catalysed reaction is a plastoquinone + NADH + (n+1) H(+)(in) = a plastoquinol + NAD(+) + n H(+)(out). It carries out the reaction a plastoquinone + NADPH + (n+1) H(+)(in) = a plastoquinol + NADP(+) + n H(+)(out). In terms of biological role, NDH shuttles electrons from NAD(P)H:plastoquinone, via FMN and iron-sulfur (Fe-S) centers, to quinones in the photosynthetic chain and possibly in a chloroplast respiratory chain. The immediate electron acceptor for the enzyme in this species is believed to be plastoquinone. Couples the redox reaction to proton translocation, and thus conserves the redox energy in a proton gradient. The protein is NAD(P)H-quinone oxidoreductase subunit 2 B, chloroplastic of Calycanthus floridus var. glaucus (Eastern sweetshrub).